Reading from the N-terminus, the 526-residue chain is Probable feruloyl esterase B-2 (526 aa).

A signal peptide spans 1–18 (MTKLSLLPLLTLASAVLA). Disulfide bonds link cysteine 27–cysteine 74 and cysteine 62–cysteine 113. The N-linked (GlcNAc...) asparagine glycan is linked to asparagine 52. Asparagine 137 carries N-linked (GlcNAc...) asparagine glycosylation. Cystine bridges form between cysteine 186-cysteine 441, cysteine 255-cysteine 272, cysteine 281-cysteine 291, and cysteine 503-cysteine 525. Catalysis depends on serine 187, which acts as the Acyl-ester intermediate. N-linked (GlcNAc...) asparagine glycosylation occurs at asparagine 233. 5 residues coordinate Ca(2+): aspartate 256, aspartate 259, alanine 261, aspartate 263, and isoleucine 265. Catalysis depends on charge relay system residues aspartate 400 and histidine 440. N-linked (GlcNAc...) asparagine glycosylation occurs at asparagine 516.

This sequence belongs to the tannase family.

The protein localises to the secreted. The catalysed reaction is feruloyl-polysaccharide + H2O = ferulate + polysaccharide.. Functionally, involved in degradation of plant cell walls. Hydrolyzes the feruloyl-arabinose ester bond in arabinoxylans as well as the feruloyl-galactose and feruloyl-arabinose ester bonds in pectin. This is Probable feruloyl esterase B-2 (faeB-2) from Aspergillus fumigatus (strain ATCC MYA-4609 / CBS 101355 / FGSC A1100 / Af293) (Neosartorya fumigata).